Here is a 484-residue protein sequence, read N- to C-terminus: MTRKIMLQGTGSDVGKSVLVAGLCRLASNHGLSVKPFKPQNMSNNAAVADDGGEIGRAQWLQALAARVPSSVHMNPVLLKPQTDVGSQVVVQGRVAGQAKGKEYQALKPSLLGSVMESFEQVSAGADLVIVEGAGSPAEINLRAGDIANMGFATRADVPVVLVGDIDRGGVIASLVGTHAILPGDDRRMVTGYLINKFRGDVTLFDDGIASVRQFTGWPCFGVVPWLKSAGRLPAEDSVVLERLTRGGGKALKVAVPVLSRIANFDDLDPLAAEPDVDIVFVRPGTPLPDDAGLIVIPGSKSTIADLDDFRRQGWDRDLDRHMRRGGRVVGICGGYQMLGSRVADPLGIEGGKREIEGLGLLSVETEMAPEKTVRNSRAWSREYDVALEGYEIHLGKTTGADCSRAPVEIDGRPDGAMSADGRVMGTYLHGLFGSDAYRSALLKSFGIEGGGGNYRRSVDAALDEIALELETVLDRAWLGTLLG.

One can recognise a GATase cobBQ-type domain in the interval 251-438 (ALKVAVPVLS…LHGLFGSDAY (188 aa)). Catalysis depends on Cys-333, which acts as the Nucleophile. His-430 is a catalytic residue.

This sequence belongs to the CobB/CobQ family. CobQ subfamily.

It participates in cofactor biosynthesis; adenosylcobalamin biosynthesis. Functionally, catalyzes amidations at positions B, D, E, and G on adenosylcobyrinic A,C-diamide. NH(2) groups are provided by glutamine, and one molecule of ATP is hydrogenolyzed for each amidation. The chain is Cobyric acid synthase from Rhizobium meliloti (strain 1021) (Ensifer meliloti).